The following is a 1049-amino-acid chain: DEAD-box ATP-dependent RNA helicase 42 (1049 aa).

Disordered stretches follow at residues 1–279 (MGSS…DEID) and 299–358 (MPAA…DDEE). Positions 64-106 (KERDREERKAREREEREKEKERERARRREERDREERSRRREAA) are enriched in basic and acidic residues. The span at 118 to 131 (RKRRRRSSHHHHHH) shows a compositional bias: basic residues. Basic and acidic residues-rich tracts occupy residues 161-170 (KKEEEQKQLD) and 181-199 (KEWQ…REQE). Over residues 201-214 (AGVGTSAAAAAAPA) the composition is skewed to low complexity. The span at 229–239 (DGEESDEEGNQ) shows a compositional bias: acidic residues. A compositionally biased stretch (low complexity) spans 262–272 (NGGDNANGANA). Positions 304 to 313 (VDDKNDKSAK) are enriched in basic and acidic residues. Positions 335-358 (EDSDSDYADDEDDEGGSEDEDDEE) are enriched in acidic residues. The Q motif signature appears at 424 to 452 (KTWVQSGLTSKLLDTIKKLGFEKPMSIQA). Positions 455–633 (LPIIMSGRDC…RKVLTKPVEI (179 aa)) constitute a Helicase ATP-binding domain. 468–475 (AKTGSGKT) lines the ATP pocket. The DEAD box signature appears at 581 to 584 (DEAD). Positions 644–805 (DITQLVEVRP…AVPEDLKGLA (162 aa)) constitute a Helicase C-terminal domain. A disordered region spans residues 816–868 (TEQAHGTGYGGSGFKFNEEEDEARKSAKKAQAREYGYEEDKSDSDSDEEGGVR). The span at 855–864 (DKSDSDSDEE) shows a compositional bias: acidic residues. A coiled-coil region spans residues 1012 to 1037 (TELSVKKAKAELKRVLEDCANHALNL).

Belongs to the DEAD box helicase family. DDX46/PRP5 subfamily.

It carries out the reaction ATP + H2O = ADP + phosphate + H(+). The protein is DEAD-box ATP-dependent RNA helicase 42 of Oryza sativa subsp. japonica (Rice).